A 171-amino-acid polypeptide reads, in one-letter code: Small ribosomal subunit protein bS16 (171 aa).

A disordered region spans residues 114–171; that stretch reads EGGPTTEAAKPKKKAATSGAKKAAKAAEPEAAASEAAEPEAAAAPAEGGEQAESSAES. Positions 142-171 are enriched in low complexity; sequence PEAAASEAAEPEAAAAPAEGGEQAESSAES.

It belongs to the bacterial ribosomal protein bS16 family.

The sequence is that of Small ribosomal subunit protein bS16 from Mycolicibacterium paratuberculosis (strain ATCC BAA-968 / K-10) (Mycobacterium paratuberculosis).